The sequence spans 270 residues: Putative phosphoenolpyruvate synthase regulatory protein (270 aa).

An ADP-binding site is contributed by 150–157 (GVSRCGKT).

It belongs to the pyruvate, phosphate/water dikinase regulatory protein family. PSRP subfamily.

The catalysed reaction is [pyruvate, water dikinase] + ADP = [pyruvate, water dikinase]-phosphate + AMP + H(+). It carries out the reaction [pyruvate, water dikinase]-phosphate + phosphate + H(+) = [pyruvate, water dikinase] + diphosphate. Its function is as follows. Bifunctional serine/threonine kinase and phosphorylase involved in the regulation of the phosphoenolpyruvate synthase (PEPS) by catalyzing its phosphorylation/dephosphorylation. The protein is Putative phosphoenolpyruvate synthase regulatory protein of Shewanella piezotolerans (strain WP3 / JCM 13877).